Here is a 779-residue protein sequence, read N- to C-terminus: FAD-dependent monooxygenase BOA8 (779 aa).

The FAD site is built by E85, R128, D331, and A344. The next 7 helical transmembrane spans lie at 471–491, 504–524, 542–562, 587–607, 618–638, 665–685, and 742–762; these read AQLA…KTPE, VKLD…IWTI, AFLL…YFFF, ILPL…WSSI, NAWY…KFIV, ILIC…SIAF, and LILT…GLIV.

The protein belongs to the paxM FAD-dependent monooxygenase family. Requires FAD as cofactor.

It is found in the membrane. It participates in polyketide biosynthesis. Functionally, FAD-dependent monooxygenase; part of the gene cluster B that mediates the biosynthesis of botcinic acid and its botcinin derivatives, acetate-derived polyketides that contribute to virulence when combined with the sesquiterpene botrydial. Botcinic acid and its derivatives have been shown to induce chlorosis and necrosis during host plant infection, but also have antifungal activities. Two polyketide synthases, BOA6 and BOA9, are involved in the biosynthesis of botcinins. BOA6 mediates the formation of the per-methylated tetraketide core by condensation of four units of malonyl-CoA with one unit of acetyl-CoA, which would be methylated in activated methylene groups to yield a bicyclic acid intermediate that could then either be converted to botrylactone derivatives or lose the starter acetate unit through a retro-Claisen type C-C bond cleavage to yield botcinin derivatives. The second polyketide synthase, BOA9, is probably required for the biosynthesis of the tetraketide side chain of botcinins. The methyltransferase (MT) domain within BOA6 is probably responsible for the incorporation of four methyl groups. The trans-enoyl reductase BOA5 might take over the enoyl reductase function of BOA6 that misses an ER domain. The monooxygenases BOA2, BOA3 and BOA4 might be involved in further hydroxylations at C4, C5 and C8, whereas BOA7, close to BOA9, could potentially be involved in the hydroxylation at C4 in the side chain of botcinins. This chain is FAD-dependent monooxygenase BOA8, found in Botryotinia fuckeliana (strain B05.10) (Noble rot fungus).